The chain runs to 154 residues: 6,7-dimethyl-8-ribityllumazine synthase (154 aa).

Residues F21, 55–57, and 79–81 contribute to the 5-amino-6-(D-ribitylamino)uracil site; these read AFE and CVI. (2S)-2-hydroxy-3-oxobutyl phosphate is bound at residue 84 to 85; that stretch reads AT. H87 acts as the Proton donor in catalysis. Residue F112 participates in 5-amino-6-(D-ribitylamino)uracil binding. R126 is a (2S)-2-hydroxy-3-oxobutyl phosphate binding site.

The protein belongs to the DMRL synthase family. Forms an icosahedral capsid composed of 60 subunits, arranged as a dodecamer of pentamers.

The catalysed reaction is (2S)-2-hydroxy-3-oxobutyl phosphate + 5-amino-6-(D-ribitylamino)uracil = 6,7-dimethyl-8-(1-D-ribityl)lumazine + phosphate + 2 H2O + H(+). It participates in cofactor biosynthesis; riboflavin biosynthesis; riboflavin from 2-hydroxy-3-oxobutyl phosphate and 5-amino-6-(D-ribitylamino)uracil: step 1/2. Its function is as follows. Catalyzes the formation of 6,7-dimethyl-8-ribityllumazine by condensation of 5-amino-6-(D-ribitylamino)uracil with 3,4-dihydroxy-2-butanone 4-phosphate. This is the penultimate step in the biosynthesis of riboflavin. In Staphylococcus aureus (strain MRSA252), this protein is 6,7-dimethyl-8-ribityllumazine synthase.